We begin with the raw amino-acid sequence, 239 residues long: MSAASVSKVVVVFSGGQDSTTCLIQALTQFDEVHGITFDYGQRHREEIEVAKSLAKRLKITSHKVMDVSLLNELAISALTRDAIPVSHELMENGLPNTFVPGRNILFLTLAGIYAYQLGAEAIITGVCETDFSGYPDCRHDFVRAMESALVQGMDKKLEIITPLMWLNKAQTWALADKYQQLDLVRHHTLTCYNGIVGDGCGECPACHLRKRGLEDYLQNKAEVMASLDKATETGKPQT.

13–23 (FSGGQDSTTCL) is a binding site for ATP. Residues Cys-192, Cys-201, Cys-204, and Cys-207 each contribute to the Zn(2+) site.

Belongs to the QueC family. Requires Zn(2+) as cofactor.

It carries out the reaction 7-carboxy-7-deazaguanine + NH4(+) + ATP = 7-cyano-7-deazaguanine + ADP + phosphate + H2O + H(+). It functions in the pathway purine metabolism; 7-cyano-7-deazaguanine biosynthesis. Its function is as follows. Catalyzes the ATP-dependent conversion of 7-carboxy-7-deazaguanine (CDG) to 7-cyano-7-deazaguanine (preQ(0)). In Shewanella sp. (strain MR-4), this protein is 7-cyano-7-deazaguanine synthase.